A 258-amino-acid chain; its full sequence is Acetylglutamate kinase (258 aa).

Substrate-binding positions include 41 to 42, Arg63, and Asn156; that span reads GG.

Belongs to the acetylglutamate kinase family. ArgB subfamily.

It is found in the cytoplasm. The enzyme catalyses N-acetyl-L-glutamate + ATP = N-acetyl-L-glutamyl 5-phosphate + ADP. The protein operates within amino-acid biosynthesis; L-arginine biosynthesis; N(2)-acetyl-L-ornithine from L-glutamate: step 2/4. Its function is as follows. Catalyzes the ATP-dependent phosphorylation of N-acetyl-L-glutamate. The protein is Acetylglutamate kinase of Bacillus amyloliquefaciens (Bacillus velezensis).